A 594-amino-acid polypeptide reads, in one-letter code: Parathyroid hormone/parathyroid hormone-related peptide receptor (594 aa).

A signal peptide spans 1–28; it reads MGTARIAPGLALLLCCPVLSSAYALVDA. Residues 29–188 are Extracellular-facing; it reads DDVMTKEEQI…TREREVFDRL (160 aa). Disulfide bonds link cysteine 48–cysteine 117, cysteine 108–cysteine 149, and cysteine 132–cysteine 171. A disordered region spans residues 66-102; sequence DKGWTSASTSGKPRKDKASGKLYPESEEDKEAPTDSR. N-linked (GlcNAc...) asparagine glycans are attached at residues asparagine 152, asparagine 162, asparagine 167, and asparagine 177. The helical transmembrane segment at 189-209 threads the bilayer; the sequence is GMIYTVGYSMSLASLTVAVLI. The Cytoplasmic portion of the chain corresponds to 210–223; it reads LAYFRRLHCTRNYI. Residues 224–244 form a helical membrane-spanning segment; that stretch reads HMHLFLSFMLRAVSIFVKDAV. The Extracellular portion of the chain corresponds to 245-295; sequence LYSGATLDEAERLTEEELRAIAQAPPPPATAAAGYAGCRVAVTFFLYFLAT. A helical membrane pass occupies residues 296–316; it reads NYYWILVEGLYLHSLIFMAFF. Topologically, residues 317–319 are cytoplasmic; the sequence is SEK. The helical transmembrane segment at 320–340 threads the bilayer; that stretch reads KYLWGFTVFGWGLPAVFVAVW. Residues 341–361 are Extracellular-facing; that stretch reads VSVRATLANTGCWDLSSGNKK. The chain crosses the membrane as a helical span at residues 362-382; that stretch reads WIIQVPILASIVLHFILFINI. The Cytoplasmic segment spans residues 383-405; that stretch reads VRVLATKLRETNAGRCDTRQQYR. Residues 406-426 form a helical membrane-spanning segment; it reads KLLKSTLVLMPLFGVHYIVFM. Topologically, residues 427–440 are extracellular; sequence ATPYTEVSGTLWQV. A helical transmembrane segment spans residues 441–461; that stretch reads QMHYEMLFNSFQGFFVAIIYC. The Cytoplasmic portion of the chain corresponds to 462–594; sequence FCNGEVQAEI…LLQEEWETVM (133 aa). The Important for interaction with G proteins motif lies at 475-478; it reads WSRW. Residues 525 to 594 are disordered; that stretch reads PTATTNGHPQ…LLQEEWETVM (70 aa). The span at 543–558 shows a compositional bias: low complexity; that stretch reads TPALETLETTPPATAA. Threonine 552 carries the post-translational modification Phosphothreonine.

Belongs to the G-protein coupled receptor 2 family. As to quaternary structure, homodimer in the absence of bound ligand. Peptide hormone binding leads to dissociation of the homodimer. In terms of processing, N-glycosylated.

The protein localises to the cell membrane. Its function is as follows. G-protein-coupled receptor for parathyroid hormone (PTH) and for parathyroid hormone-related peptide (PTHLH). Ligand binding causes a conformation change that triggers signaling via guanine nucleotide-binding proteins (G proteins) and modulates the activity of downstream effectors, such as adenylate cyclase (cAMP). PTH1R is coupled to G(s) G alpha proteins and mediates activation of adenylate cyclase activity. PTHLH dissociates from PTH1R more rapidly than PTH; as consequence, the cAMP response induced by PTHLH decays faster than the response induced by PTH. The protein is Parathyroid hormone/parathyroid hormone-related peptide receptor (PTH1R) of Pongo abelii (Sumatran orangutan).